The primary structure comprises 237 residues: Regulator of G-protein signaling 9-binding protein (237 aa).

At Met-1–Lys-212 the chain is on the cytoplasmic side. A coiled-coil region spans residues Ser-30–Thr-54. Positions Glu-153–Glu-202 are SNARE-like. Residues Ala-213 to Val-233 form a helical; Anchor for type IV membrane protein membrane-spanning segment. Residues Ala-234 to Ser-237 lie on the Extracellular side of the membrane.

This sequence belongs to the RGS7BP/RGS9BP family. Specifically interacts with isoform RGS9-1 of RGS9. Interaction is decreased when RGS9-1 is phosphorylated at 'Ser-475'. Component of the RGS9-1-Gbeta5 complex composed of RGS9-1, Gbeta5 (GNB5) and RGS9BP. As to expression, predominantly expressed in photoreceptors of the retina. Weakly expressed in other areas of the central nervous system.

It is found in the membrane. Its function is as follows. Regulator of G protein-coupled receptor (GPCR) signaling in phototransduction. Participates in the recovery phase of visual transduction via its interaction with RGS9-1 isoform. Acts as a membrane-anchor that mediates the targeting of RGS9-1 to the photoreceptor outer segment, where phototransduction takes place. Enhances the ability of RGS9-1 to stimulate G protein GTPase activity, allowing the visual signal to be terminated on the physiologically time scale. It also controls the proteolytic stability of RGS9-1, probably by protecting it from degradation. The sequence is that of Regulator of G-protein signaling 9-binding protein (Rgs9bp) from Mus musculus (Mouse).